The sequence spans 509 residues: Dihydrolipoyl dehydrogenase, mitochondrial (509 aa).

The N-terminal 35 residues, 1–35 (MQSWSRVYCSLAKKGHFNRLSHGLQGASSVPLRTY), are a transit peptide targeting the mitochondrion. Lys-66 carries the N6-acetyllysine; alternate modification. Lys-66 is subject to N6-succinyllysine; alternate. FAD contacts are provided by residues 71–80 (EKNETLGGTC) and Lys-89. Cys-80 and Cys-85 are joined by a disulfide. Residues Lys-104, Lys-122, Lys-132, and Lys-143 each carry the N6-acetyllysine; alternate modification. An N6-succinyllysine; alternate mark is found at Lys-104, Lys-122, Lys-132, and Lys-143. Gly-154 serves as a coordination point for FAD. Lys-159 is modified (N6-succinyllysine). 183–185 (TGS) provides a ligand contact to FAD. Residues 220–227 (GAGVIGVE) and Glu-243 each bind NAD(+). Residues Lys-273 and Lys-277 each carry the N6-succinyllysine modification. An NAD(+)-binding site is contributed by Val-278. Phosphoserine is present on residues Ser-285 and Ser-297. Gly-314 contributes to the NAD(+) binding site. Lys-346 bears the N6-acetyllysine mark. FAD is bound by residues Asp-355 and 361-364 (MLAH). An N6-acetyllysine; alternate modification is found at Lys-410. Lys-410 is subject to N6-succinyllysine; alternate. N6-acetyllysine occurs at positions 417 and 420. Position 430 is an N6-succinyllysine (Lys-430). The active-site Proton acceptor is the His-487. Ser-502 carries the post-translational modification Phosphoserine. Lys-505 is modified (N6-acetyllysine; alternate). Position 505 is an N6-succinyllysine; alternate (Lys-505).

It belongs to the class-I pyridine nucleotide-disulfide oxidoreductase family. In terms of assembly, homodimer. Part of the multimeric pyruvate dehydrogenase complex that contains multiple copies of pyruvate dehydrogenase (subunits PDHA (PDHA1 or PDHA2) and PDHB, E1), dihydrolipoamide acetyltransferase (DLAT, E2) and lipoamide dehydrogenase (DLD, E3). These subunits are bound to an inner core composed of about 48 DLAT and 12 PDHX molecules (by non covalent bonds). The 2-oxoglutarate dehydrogenase complex is composed of OGDH (2-oxoglutarate dehydrogenase; E1), DLST (dihydrolipoamide succinyltransferase; E2), DLD (dihydrolipoamide dehydrogenase; E3) and the assembly factor KGD4. It contains multiple copies of the three enzymatic components (E1, E2 and E3). In the nucleus, the 2-oxoglutarate dehydrogenase complex associates with KAT2A. Interacts with PDHX. Requires FAD as cofactor. Post-translationally, tyrosine phosphorylated.

The protein resides in the mitochondrion matrix. The protein localises to the nucleus. It localises to the cell projection. It is found in the cilium. Its subcellular location is the flagellum. The protein resides in the cytoplasmic vesicle. The protein localises to the secretory vesicle. It localises to the acrosome. It carries out the reaction N(6)-[(R)-dihydrolipoyl]-L-lysyl-[protein] + NAD(+) = N(6)-[(R)-lipoyl]-L-lysyl-[protein] + NADH + H(+). Lipoamide dehydrogenase is a component of the glycine cleavage system as well as an E3 component of three alpha-ketoacid dehydrogenase complexes (pyruvate-, alpha-ketoglutarate-, and branched-chain amino acid-dehydrogenase complex). The 2-oxoglutarate dehydrogenase complex is mainly active in the mitochondrion. A fraction of the 2-oxoglutarate dehydrogenase complex also localizes in the nucleus and is required for lysine succinylation of histones: associates with KAT2A on chromatin and provides succinyl-CoA to histone succinyltransferase KAT2A. In monomeric form may have additional moonlighting function as serine protease. Involved in the hyperactivation of spermatazoa during capacitation and in the spermatazoal acrosome reaction. The polypeptide is Dihydrolipoyl dehydrogenase, mitochondrial (Dld) (Rattus norvegicus (Rat)).